The primary structure comprises 348 residues: Anthranilate phosphoribosyltransferase (348 aa).

Residues G91, 94 to 95, T99, 101 to 104, 119 to 127, and S131 contribute to the 5-phospho-alpha-D-ribose 1-diphosphate site; these read GD, NIST, and KHGNRSASG. Residue G91 participates in anthranilate binding. S103 contributes to the Mg(2+) binding site. N122 serves as a coordination point for anthranilate. Residue R177 coordinates anthranilate. Mg(2+) contacts are provided by D236 and E237.

This sequence belongs to the anthranilate phosphoribosyltransferase family. In terms of assembly, homodimer. It depends on Mg(2+) as a cofactor.

The catalysed reaction is N-(5-phospho-beta-D-ribosyl)anthranilate + diphosphate = 5-phospho-alpha-D-ribose 1-diphosphate + anthranilate. It participates in amino-acid biosynthesis; L-tryptophan biosynthesis; L-tryptophan from chorismate: step 2/5. In terms of biological role, catalyzes the transfer of the phosphoribosyl group of 5-phosphorylribose-1-pyrophosphate (PRPP) to anthranilate to yield N-(5'-phosphoribosyl)-anthranilate (PRA). The protein is Anthranilate phosphoribosyltransferase of Synechococcus sp. (strain ATCC 27144 / PCC 6301 / SAUG 1402/1) (Anacystis nidulans).